Consider the following 289-residue polypeptide: D-xylonolactone lactonase (289 aa).

A Fe(2+)-binding site is contributed by Glu-17. Residues Arg-98, Asn-100, Glu-119, and Asn-145 each coordinate D-xylono-1,5-lactone. Fe(2+)-binding residues include Asn-145 and Asp-195. Residue Asp-195 is the Proton donor/acceptor of the active site.

This sequence belongs to the SMP-30/CGR1 family. It depends on Fe(2+) as a cofactor.

It carries out the reaction D-xylono-1,5-lactone + H2O = D-xylonate + H(+). Involved in the degradation of D-xylose. Catalyzes the hydrolysis of D-xylonolactone to D-xylonate. This is D-xylonolactone lactonase from Caulobacter vibrioides (strain ATCC 19089 / CIP 103742 / CB 15) (Caulobacter crescentus).